Consider the following 243-residue polypeptide: Probable transcriptional regulatory protein Smlt3713 (243 aa).

Belongs to the TACO1 family.

The protein resides in the cytoplasm. The sequence is that of Probable transcriptional regulatory protein Smlt3713 from Stenotrophomonas maltophilia (strain K279a).